Consider the following 278-residue polypeptide: Cytoplasmic envelopment protein 1 (278 aa).

This sequence belongs to the herpesviridae cytoplasmic envelopment protein 1 family.

The protein localises to the virion. The protein resides in the virion tegument. Its subcellular location is the host cytoplasm. It localises to the host Golgi apparatus. Its function is as follows. Plays a critical role in cytoplasmic virus egress. Participates in the final step of tegumentation and envelope acquisition within the host cytoplasm. In Homo sapiens (Human), this protein is Cytoplasmic envelopment protein 1 (ORF42).